The chain runs to 91 residues: Kazal-type trypsin inhibitor (91 aa).

A signal peptide spans Met1–Ala22. Residues Asp25–Asn78 enclose the Kazal-like domain. 3 disulfide bridges follow: Cys31–Cys56, Cys33–Cys52, and Cys41–Cys76. Asn78 carries an N-linked (GlcNAc...) asparagine glycan.

As to quaternary structure, interacts with human PLG (plasmin). As to expression, female salivary gland. Female gut at 3 and 24 hours after blood feeding. Female carcass. Male tissues. Not detected in ovary and fat body at 3 and 24 hours after blood feeding.

The protein localises to the secreted. Anticoagulant protein that decreases host thrombin (F2) activity via an uncompetitive inhibition mechanism. Inhibits amidolytic activity of host plasmin (PLG). Inhibits amidolytic activity of host trypsin. Inhibits trypsin-like endogenous activity from gut of female mosquitoes 24 hours after feeding and weakly affects enzyme activity from gut 3 hours after feeding, suggesting a possible role as an inhibitor of endogenous proteases. Its function is as follows. (Microbial infection) Limits host plasmin-mediated enhancement of dengue virus type 2 infection in mosquito midgut. The protein is Kazal-type trypsin inhibitor of Aedes aegypti (Yellowfever mosquito).